A 665-amino-acid polypeptide reads, in one-letter code: Genetic interactor of prohibitins 3, mitochondrial (665 aa).

A mitochondrion-targeting transit peptide spans 1 to 17 (MISRLIHSKHYLTLFRQ). One can recognise a CP-type G domain in the interval 185–380 (EQVLQNLPRA…VYDVPGFSSS (196 aa)).

Belongs to the TRAFAC class YlqF/YawG GTPase family. GEP3 subfamily.

It is found in the mitochondrion. May be involved in the mitochondrial lipid metabolism. This is Genetic interactor of prohibitins 3, mitochondrial (GEP3) from Lodderomyces elongisporus (strain ATCC 11503 / CBS 2605 / JCM 1781 / NBRC 1676 / NRRL YB-4239) (Yeast).